Reading from the N-terminus, the 484-residue chain is Poly(A) polymerase alpha-B (484 aa).

Positions 240–257 (RKQLHQLLPSHVLPKKKK) match the Nuclear localization signal 1 motif. Disordered regions lie at residues 276-314 (SVDS…PVSL), 326-356 (VPQN…SSTP), and 375-484 (KPVT…RLNR). Residues 392–407 (KRTSSPTNEESPKKTK) carry the Nuclear localization signal 2 motif. Basic and acidic residues predominate over residues 423–441 (EQNKLEPEELKEVHSEEKS). Residues 451 to 464 (SSQRSSSTDLSDIS) are compositionally biased toward low complexity.

Belongs to the poly(A) polymerase family. Monomer.

The protein localises to the nucleus. It catalyses the reaction RNA(n) + ATP = RNA(n)-3'-adenine ribonucleotide + diphosphate. In terms of biological role, polymerase that creates the 3'-poly(A) tail of mRNA's. May acquire specificity through interaction with a cleavage and polyadenylation factor (CPSF). The sequence is that of Poly(A) polymerase alpha-B (papola-b) from Xenopus laevis (African clawed frog).